The primary structure comprises 358 residues: DNA-directed RNA polymerase subunit alpha (358 aa).

Residues 1 to 231 (MIQNVTDDKI…NIFLSLSNSS (231 aa)) form an alpha N-terminal domain (alpha-NTD) region. An alpha C-terminal domain (alpha-CTD) region spans residues 266–358 (QESLGWKKIS…LELINNKDIS (93 aa)).

The protein belongs to the RNA polymerase alpha chain family. As to quaternary structure, in plastids the minimal PEP RNA polymerase catalytic core is composed of four subunits: alpha, beta, beta', and beta''. When a (nuclear-encoded) sigma factor is associated with the core the holoenzyme is formed, which can initiate transcription.

The protein resides in the plastid. It is found in the chloroplast. The catalysed reaction is RNA(n) + a ribonucleoside 5'-triphosphate = RNA(n+1) + diphosphate. Functionally, DNA-dependent RNA polymerase catalyzes the transcription of DNA into RNA using the four ribonucleoside triphosphates as substrates. The sequence is that of DNA-directed RNA polymerase subunit alpha from Chara vulgaris (Common stonewort).